The primary structure comprises 98 residues: Defensin-like protein 68 (98 aa).

Positions 1–19 (MGSSKLLVALTLVVMITIS) are cleaved as a signal peptide. Intrachain disulfides connect Cys38-Cys88, Cys42-Cys65, Cys51-Cys86, and Cys55-Cys87.

This sequence belongs to the DEFL family.

Its subcellular location is the secreted. This chain is Defensin-like protein 68, found in Arabidopsis thaliana (Mouse-ear cress).